Here is a 302-residue protein sequence, read N- to C-terminus: Glutaminase (302 aa).

7 residues coordinate substrate: S61, N111, E155, N162, Y186, Y238, and V256.

The protein belongs to the glutaminase family. In terms of assembly, homotetramer.

It catalyses the reaction L-glutamine + H2O = L-glutamate + NH4(+). The protein is Glutaminase of Pseudomonas putida (strain ATCC 700007 / DSM 6899 / JCM 31910 / BCRC 17059 / LMG 24140 / F1).